The following is a 243-amino-acid chain: Probable intron-encoded endonuclease aI3 (243 aa).

The protein belongs to the LAGLIDADG endonuclease family.

The protein localises to the mitochondrion. Its function is as follows. Mitochondrial DNA endonuclease involved in intron homing. In Dictyostelium citrinum (Slime mold), this protein is Probable intron-encoded endonuclease aI3 (aI3).